Consider the following 749-residue polypeptide: Ribosome-releasing factor 2, mitochondrial (749 aa).

The transit peptide at 1-22 (MLLLLCNRSVVPRGIRRILRTA) directs the protein to the mitochondrion. The tr-type G domain occupies 44–322 (KNIRNIGILA…AVLKYLPAPN (279 aa)). Residues 53 to 60 (AHIDGGKT), 117 to 121 (DTPGH), and 171 to 174 (NKMD) contribute to the GTP site.

It belongs to the TRAFAC class translation factor GTPase superfamily. Classic translation factor GTPase family. EF-G/EF-2 subfamily.

It is found in the mitochondrion. In terms of biological role, mitochondrial GTPase that mediates the disassembly of ribosomes from messenger RNA at the termination of mitochondrial protein biosynthesis. Not involved in the GTP-dependent ribosomal translocation step during translation elongation. The polypeptide is Ribosome-releasing factor 2, mitochondrial (Culex quinquefasciatus (Southern house mosquito)).